Here is a 322-residue protein sequence, read N- to C-terminus: Quinolinate synthase (322 aa).

Iminosuccinate contacts are provided by histidine 38 and serine 55. A [4Fe-4S] cluster-binding site is contributed by cysteine 100. Residues 126–128 (YIN) and serine 143 contribute to the iminosuccinate site. Cysteine 186 lines the [4Fe-4S] cluster pocket. Residues 212 to 214 (HPE) and threonine 229 each bind iminosuccinate. Residue cysteine 279 coordinates [4Fe-4S] cluster.

Belongs to the quinolinate synthase family. Type 2 subfamily. The cofactor is [4Fe-4S] cluster.

Its subcellular location is the cytoplasm. The enzyme catalyses iminosuccinate + dihydroxyacetone phosphate = quinolinate + phosphate + 2 H2O + H(+). Its pathway is cofactor biosynthesis; NAD(+) biosynthesis; quinolinate from iminoaspartate: step 1/1. In terms of biological role, catalyzes the condensation of iminoaspartate with dihydroxyacetone phosphate to form quinolinate. The polypeptide is Quinolinate synthase (Cyanothece sp. (strain PCC 7425 / ATCC 29141)).